The primary structure comprises 1040 residues: Multidrug resistance protein MdtB (1040 aa).

A run of 12 helical transmembrane segments spans residues 16-36, 347-367, 369-389, 396-416, 440-460, 472-492, 537-557, 863-883, 888-908, 911-931, 968-988, and 998-1018; these read FIMR…AGII, LMMA…NIPA, IIPG…MVFL, LTLM…IVVI, IGFT…PLLF, FAIT…TLTP, WLTL…WVFI, LGST…VLGI, FIHP…ALLA, IAGS…IGIV, ILMT…STGV, and IGMV…TPVI.

It belongs to the resistance-nodulation-cell division (RND) (TC 2.A.6) family. MdtB subfamily. Part of a tripartite efflux system composed of MdtA, MdtB and MdtC. MdtB forms a heteromultimer with MdtC.

It localises to the cell inner membrane. Functionally, the MdtABC tripartite complex confers resistance against novobiocin and deoxycholate. The polypeptide is Multidrug resistance protein MdtB (Escherichia coli (strain SE11)).